A 390-amino-acid polypeptide reads, in one-letter code: Neuromedin-B receptor (390 aa).

Residues 1 to 19 (MPSKSLSNLSVTTGANESG) show a composition bias toward polar residues. The disordered stretch occupies residues 1-22 (MPSKSLSNLSVTTGANESGSVP). At 1-41 (MPSKSLSNLSVTTGANESGSVPEGWERDFLPASDGTTTELV) the chain is on the extracellular side. Residues N8 and N16 are each glycosylated (N-linked (GlcNAc...) asparagine). A helical membrane pass occupies residues 42-65 (IRCVIPSLYLLIITVGLLGNIMLV). The Cytoplasmic portion of the chain corresponds to 66–79 (KIFITNSAMRSVPN). A helical membrane pass occupies residues 80-99 (IFISNLAAGDLLLLLTCVPV). Residues 100–117 (DASRYFFDEWMFGKVGCK) lie on the Extracellular side of the membrane. The cysteines at positions 116 and 198 are disulfide-linked. Residues 118 to 139 (LIPVIQLTSVGVSVFTLTALSA) form a helical membrane-spanning segment. Residues 140-156 (DRYRAIVNPMDMQTSGA) lie on the Cytoplasmic side of the membrane. A helical membrane pass occupies residues 157–177 (LLRTCVKAMGIWVVSVLLAVP). Topologically, residues 178–211 (EAVFSEVARISSLDNSSFTACIPYPQTDELHPKI) are extracellular. Residue N192 is glycosylated (N-linked (GlcNAc...) asparagine). The helical transmembrane segment at 212–235 (HSVLIFLVYFLIPLAIISIYYYHI) threads the bilayer. At 236-266 (AKTLIKSAHNLPGEYNEHTKKQMETRKRLAK) the chain is on the cytoplasmic side. A helical transmembrane segment spans residues 267–287 (IVLVFVGCFIFCWFPNHILYM). Residues 288-299 (YRSFNYNEIDPS) are Extracellular-facing. A helical transmembrane segment spans residues 300 to 327 (LGHMIVTLVARVLSFGNSCVNPFALYLL). Topologically, residues 328–390 (SESFRRHFNS…GHSMKQEMAL (63 aa)) are cytoplasmic. C341 carries S-palmitoyl cysteine lipidation. Phosphoserine is present on S352.

The protein belongs to the G-protein coupled receptor 1 family. As to expression, expressed in epididymis (at protein level).

The protein localises to the cell membrane. Functionally, receptor for neuromedin-B. Contributes to the maintenance of basal sigh rate through signaling in the pre-Botzinger complex, a cluster of several thousand neurons in the ventrolateral medulla responsible for inspiration during respiratory activity. Contributes to the induction of sneezing following exposure to chemical irritants or allergens which causes release of NMB by nasal sensory neurons and activation of NMBR-expressing neurons in the sneeze-evoking region of the brainstem. These in turn activate neurons of the caudal ventral respiratory group, giving rise to the sneezing response. Contributes to induction of acute itch, possibly through its activation on dorsal root ganglion neurons by the NMB peptide. Plays a role in the innate immune response to influenza A virus infection by enhancing interferon alpha expression and reducing expression of IL6. Plays a role in CSF1-induced proliferation of osteoclast precursors by contributing to the positive regulation of the expression of the CSF1 receptor CSF1R. The chain is Neuromedin-B receptor (NMBR) from Homo sapiens (Human).